Reading from the N-terminus, the 476-residue chain is Serine/threonine-protein kinase Chk1 (476 aa).

The segment at 1-265 is interaction with CLSPN; sequence MAVPFVEDWD…IPDIKKDRWY (265 aa). Residues 9-265 form the Protein kinase domain; the sequence is WDLVQTLGEG…IPDIKKDRWY (257 aa). Residues 15–23 and lysine 38 each bind ATP; that span reads LGEGAYGEV. Catalysis depends on aspartate 130, which acts as the Proton acceptor. A Glycyl lysine isopeptide (Lys-Gly) (interchain with G-Cter in ubiquitin) cross-link involves residue lysine 132. Positions 267-329 are disordered; that stretch reads KPLNRGAKRP…EPRTGLSLWD (63 aa). Serine 280 carries the post-translational modification Phosphoserine; by PKB/AKT1. A compositionally biased stretch (low complexity) spans 280-291; it reads SGGMSESSSGFS. Phosphoserine occurs at positions 286, 296, and 301. Residues 298–320 show a composition bias toward polar residues; the sequence is LDFSPINSGSSEENVKFSSSQPE. Phosphoserine; by ATM and ATR is present on residues serine 317 and serine 345. The autoinhibitory region stretch occupies residues 391–476; the sequence is QCLKETFEKL…SSQKVWFPVT (86 aa). Lysine 436 is covalently cross-linked (Glycyl lysine isopeptide (Lys-Gly) (interchain with G-Cter in ubiquitin)). A phosphoserine mark is found at serine 463, serine 467, and serine 468.

It belongs to the protein kinase superfamily. CAMK Ser/Thr protein kinase family. NIM1 subfamily. In terms of assembly, interacts (phosphorylated by ATR) with RAD51. Interacts with and phosphorylates CLSPN, an adapter protein that regulates the ATR-dependent phosphorylation of CHEK1. Interacts with BRCA1. Interacts with and phosphorylates CDC25A, CDC25B and CDC25C. Interacts with FBXO6, which regulates CHEK1. Interacts with PPM1D, which regulates CHEK1 through dephosphorylation. Interacts with TIMELESS; DNA damage-dependent. Interacts with FEM1B; activates CHEK1 in response to stress. Interacts with TLK1. Interacts with XPO1 and YWHAZ. Interacts with CDK5RAP3; antagonizes CHEK1. Post-translationally, phosphorylated by ATR in a RAD17-dependent manner in response to ultraviolet irradiation and inhibition of DNA replication. Phosphorylated by ATM in response to ionizing irradiation. ATM and ATR can both phosphorylate Ser-317 and Ser-345 and this results in enhanced kinase activity. Phosphorylation at Ser-345 induces a change in the conformation of the protein, activates the kinase activity and is a prerequisite for interaction with FBXO6 and subsequent ubiquitination at Lys-436. Phosphorylation at Ser-345 also increases binding to 14-3-3 proteins and promotes nuclear retention. Conversely, dephosphorylation at Ser-345 by PPM1D may contribute to exit from checkpoint mediated cell cycle arrest. Phosphorylation at Ser-280 by AKT1/PKB, may promote mono and/or diubiquitination. Also phosphorylated at undefined residues during mitotic arrest, resulting in decreased activity. Ubiquitinated. Mono or diubiquitination promotes nuclear exclusion. The activated form (phosphorylated on Ser-345) is polyubiquitinated at Lys-436 by some SCF-type E3 ubiquitin ligase complex containing FBXO6 promoting its degradation. Ubiquitination and degradation are required to terminate the checkpoint and ensure that activated CHEK1 does not accumulate as cells progress through S phase, when replication forks encounter transient impediments during normal DNA replication. 'Lys-63'-mediated ubiquitination by TRAF4 at Lys-132 activates cell cycle arrest and activation of DNA repair. In terms of processing, proteolytically cleaved at the C-terminus by SPRTN during normal DNA replication, thereby promoting CHEK1 removal from chromatin and activating the protein kinase activity. Expressed in brain, heart, liver, lung, skeletal muscle, spleen and testis. In terms of tissue distribution, expressed only in liver.

The protein resides in the nucleus. It is found in the chromosome. The protein localises to the cytoplasm. It localises to the cytoskeleton. Its subcellular location is the microtubule organizing center. The protein resides in the centrosome. The enzyme catalyses L-seryl-[protein] + ATP = O-phospho-L-seryl-[protein] + ADP + H(+). It catalyses the reaction L-threonyl-[protein] + ATP = O-phospho-L-threonyl-[protein] + ADP + H(+). With respect to regulation, activated through phosphorylation predominantly by ATR but also by ATM in response to DNA damage or inhibition of DNA replication. Activation is modulated by several mediators including CLSPN, BRCA1 and FEM1B. Proteolytic cleavage at the C-terminus by SPRTN during normal DNA replication activates the protein kinase activity. Serine/threonine-protein kinase which is required for checkpoint-mediated cell cycle arrest and activation of DNA repair in response to the presence of DNA damage or unreplicated DNA. May also negatively regulate cell cycle progression during unperturbed cell cycles. This regulation is achieved by a number of mechanisms that together help to preserve the integrity of the genome. Recognizes the substrate consensus sequence [R-X-X-S/T]. Binds to and phosphorylates CDC25A, CDC25B and CDC25C. Phosphorylation of CDC25A at 'Ser-178' and 'Thr-507' and phosphorylation of CDC25C at 'Ser-216' creates binding sites for 14-3-3 proteins which inhibit CDC25A and CDC25C. Phosphorylation of CDC25A at 'Ser-76', 'Ser-124', 'Ser-178', 'Ser-279' and 'Ser-293' promotes proteolysis of CDC25A. Phosphorylation of CDC25A at 'Ser-76' primes the protein for subsequent phosphorylation at 'Ser-79', 'Ser-82' and 'Ser-88' by NEK11, which is required for polyubiquitination and degradation of CDCD25A. Inhibition of CDC25 leads to increased inhibitory tyrosine phosphorylation of CDK-cyclin complexes and blocks cell cycle progression. Also phosphorylates NEK6. Binds to and phosphorylates RAD51 at 'Thr-309', which promotes the release of RAD51 from BRCA2 and enhances the association of RAD51 with chromatin, thereby promoting DNA repair by homologous recombination. Phosphorylates multiple sites within the C-terminus of TP53, which promotes activation of TP53 by acetylation and promotes cell cycle arrest and suppression of cellular proliferation. Also promotes repair of DNA cross-links through phosphorylation of FANCE. Binds to and phosphorylates TLK1 at 'Ser-743', which prevents the TLK1-dependent phosphorylation of the chromatin assembly factor ASF1A. This may enhance chromatin assembly both in the presence or absence of DNA damage. May also play a role in replication fork maintenance through regulation of PCNA. May regulate the transcription of genes that regulate cell-cycle progression through the phosphorylation of histones. Phosphorylates histone H3.1 (to form H3T11ph), which leads to epigenetic inhibition of a subset of genes. May also phosphorylate RB1 to promote its interaction with the E2F family of transcription factors and subsequent cell cycle arrest. Phosphorylates SPRTN, promoting SPRTN recruitment to chromatin. Reduces replication stress and activates the G2/M checkpoint, by phosphorylating and inactivating PABIR1/FAM122A and promoting the serine/threonine-protein phosphatase 2A-mediated dephosphorylation and stabilization of WEE1 levels and activity. This Rattus norvegicus (Rat) protein is Serine/threonine-protein kinase Chk1 (Chek1).